A 404-amino-acid chain; its full sequence is Transcriptional repressor OPI1 (404 aa).

Ser10 is subject to Phosphoserine. The segment at 25–51 (QSCRQKSQPSEDVSQADKMPASESSTT) is disordered. The span at 26–37 (SCRQKSQPSEDV) shows a compositional bias: polar residues. The interval 109 to 138 (KRQKLSRAIAKGKDNLKEYKLNMSIESKKR) is basic motif. Residues 139–160 (LVTCLHLLKLANKQLSDKISCL) form a leucine-zipper region. 3 disordered regions span residues 170–201 (HPLH…DEEF), 305–327 (LQQQ…SSVT), and 378–404 (QQQQ…DSKD). The segment covering 186–201 (GEDETSSDEDDDDEEF) has biased composition (acidic residues). The FFAT signature appears at 200 to 206 (EFFDASE). The segment covering 378-387 (QQQQYRQQQQ) has biased composition (low complexity). Polar residues predominate over residues 394 to 404 (KPSQDNVDSKD).

In terms of assembly, interacts with SCS2.

It localises to the endoplasmic reticulum. The protein resides in the nucleus. Functionally, negative regulator of the transcriptional complex INO2-INO4 in response to phospholipid precursor availability. When precursors become limiting, OPI1 is retained at the endoplasmic reticulum (ER) and INO2-INO4 activates INO1 and other genes required for phospholipid biosynthesis, whereas abundant precursor availability results in targeting of OPI1 to the nucleus to repress transcription of these genes. Binds directly to phosphatidic acid, which is required for ER targeting and may act as sensing mechanism for precursor availability, as phosphatidic acid becomes rapidly depleted upon phospholipid biosynthesis. This Saccharomyces cerevisiae (strain ATCC 204508 / S288c) (Baker's yeast) protein is Transcriptional repressor OPI1 (OPI1).